Reading from the N-terminus, the 210-residue chain is Ion-translocating oxidoreductase complex subunit G (210 aa).

A helical membrane pass occupies residues 9-29 (GVTLAVFAAITTGLTAVINAV). Thr175 is modified (FMN phosphoryl threonine).

Belongs to the RnfG family. In terms of assembly, the complex is composed of six subunits: RnfA, RnfB, RnfC, RnfD, RnfE and RnfG. Requires FMN as cofactor.

It is found in the cell inner membrane. Functionally, part of a membrane-bound complex that couples electron transfer with translocation of ions across the membrane. This Erwinia tasmaniensis (strain DSM 17950 / CFBP 7177 / CIP 109463 / NCPPB 4357 / Et1/99) protein is Ion-translocating oxidoreductase complex subunit G.